Consider the following 201-residue polypeptide: LexA repressor (201 aa).

Residues 28–48 constitute a DNA-binding region (H-T-H motif); it reads RAEIANQLGFRSANAAEEHLK. Catalysis depends on for autocatalytic cleavage activity residues serine 118 and lysine 155.

It belongs to the peptidase S24 family. As to quaternary structure, homodimer.

The enzyme catalyses Hydrolysis of Ala-|-Gly bond in repressor LexA.. Its function is as follows. Represses a number of genes involved in the response to DNA damage (SOS response), including recA and lexA. In the presence of single-stranded DNA, RecA interacts with LexA causing an autocatalytic cleavage which disrupts the DNA-binding part of LexA, leading to derepression of the SOS regulon and eventually DNA repair. The chain is LexA repressor from Saccharophagus degradans (strain 2-40 / ATCC 43961 / DSM 17024).